An 837-amino-acid polypeptide reads, in one-letter code: MSLSHLYRDGEGRVDDDDDERENFEITDWDLQNEFNPNRQRHWQTKEEATYGVWAEHDSDDERPSFGGKRPRDYSAPVNFISAGLKKGAAEEAELDDSEDEEKPGKQEELPKDLGPKKLKTGGNFKPSQKGFAGGTKSFMDFGSWERHTKGIGQKLLQKMGYVPGRGLGKNAQGIINPIEAKQRKGKGAVGAYGSERTTQSLQDFPVVDSEEEAEEEFQKELSQWRKDPSGSKKKPKYSYKTVEELKAKGRVSKKLSAPQKEISQVKVIDMTGREQKVYYSYSQISHKHSVPDEGLPLQAQPPPVPGKEAKAPGFALPELEHNLQLLIELTEQEIIQNDRQLQYERDMVVNLSHELDKMAEVLEHEERAIANLSKVLELVEQCARRLQPACSNPLTLDECARVFQTLQDKYYEEYRMSDRVDLAVAIVYPLMKDYFKDWDSLKDCRYGTEIISKWKSLLENDQLLSHGGQDLLADAFHRLMWEVWMPFVRNIVTQWQPRNCDPMVDFLDSWVHIIPVWVLDNILDQLIFPKLQKEVENWNPLTDTVPIHSWIHPWLPLMQARLEPLYSPIRSKLSSALQKWHPSDSSAKLILQPWKDVFTPGSWEAFMVKNIVPKLGMCLGELVINPHQQHMDAFYWVIDWEGMISVSSLVGLLEKHFFPKWLQVLCSWLSNSPNYEEITKWYLGWKSMFSDQVLAHPSVKDKFNEALDIMNRAVSSNVGAYMQPGARENIAYLTHTERRKDFQYEAMQERREAENMAQRGIGAAASSVPMNFKDLIETKAEEHNIVFMPVIGKRHEGKQLYTFGRIVIYIDRGVVFVQGEKTWVPTSLQSLIDMAK.

Composition is skewed to basic and acidic residues over residues 1 to 13 and 50 to 64; these read MSLS…GEGR and TYGV…DERP. Disordered stretches follow at residues 1–21 and 50–136; these read MSLS…DDER and TYGV…AGGT. The required for interaction with DHX15 stretch occupies residues 1–50; sequence MSLSHLYRDGEGRVDDDDDERENFEITDWDLQNEFNPNRQRHWQTKEEAT. S2, S59, and S98 each carry phosphoserine. A compositionally biased stretch (acidic residues) spans 91–102; sequence EEAELDDSEDEE. Positions 103–116 are enriched in basic and acidic residues; it reads KPGKQEELPKDLGP. A Phosphoserine modification is found at S144. Residues 149 to 195 enclose the G-patch domain; that stretch reads TKGIGQKLLQKMGYVPGRGLGKNAQGIINPIEAKQRKGKGAVGAYGS. The disordered stretch occupies residues 183 to 236; that stretch reads QRKGKGAVGAYGSERTTQSLQDFPVVDSEEEAEEEFQKELSQWRKDPSGSKKKP. S210 carries the post-translational modification Phosphoserine. Residues 217–231 show a composition bias toward basic and acidic residues; the sequence is EFQKELSQWRKDPSG. The Nuclear localization signal motif lies at 700–705; that stretch reads VKDKFN. A required for nuclear speckle localization region spans residues 710-734; sequence IMNRAVSSNVGAYMQPGARENIAYL.

It belongs to the TFP11/STIP family. In terms of assembly, identified in the spliceosome C complex. Found in the Intron Large (IL) complex, a post-mRNA release spliceosomal complex containing the excised intron, U2, U5 and U6 snRNPs, and splicing factors. Interacts with TUFT1. Interacts with DHX15; indicative for a recruitment of DHX15 to the IL complex. Interacts with GCFC2.

Its subcellular location is the cytoplasm. It is found in the nucleus. Functionally, involved in pre-mRNA splicing, specifically in spliceosome disassembly during late-stage splicing events. Intron turnover seems to proceed through reactions in two lariat-intron associated complexes termed Intron Large (IL) and Intron Small (IS). In cooperation with DHX15 seems to mediate the transition of the U2, U5 and U6 snRNP-containing IL complex to the snRNP-free IS complex leading to efficient debranching and turnover of excised introns. May play a role in the differentiation of ameloblasts and odontoblasts or in the forming of the enamel extracellular matrix. The sequence is that of Tuftelin-interacting protein 11 (TFIP11) from Oryctolagus cuniculus (Rabbit).